A 319-amino-acid polypeptide reads, in one-letter code: Malate dehydrogenase (319 aa).

Residues 10–15 and Asp-34 contribute to the NAD(+) site; that span reads GAGNIG. The substrate site is built by Arg-83 and Arg-89. NAD(+)-binding positions include Asn-96 and 119-121; that span reads ITN. Substrate contacts are provided by Asn-121 and Arg-152. His-176 serves as the catalytic Proton acceptor.

This sequence belongs to the LDH/MDH superfamily. MDH type 3 family.

It carries out the reaction (S)-malate + NAD(+) = oxaloacetate + NADH + H(+). Catalyzes the reversible oxidation of malate to oxaloacetate. The polypeptide is Malate dehydrogenase (Francisella novicida).